A 248-amino-acid polypeptide reads, in one-letter code: Pulmonary surfactant-associated protein A (248 aa).

Residues 1–20 (MLLCSLTLTLILLAVSGTKC) form the signal peptide. The Collagen-like domain maps to 31–100 (GVPGIPGSPG…PGERGPPGPP (70 aa)). The disordered stretch occupies residues 34–105 (GIPGSPGLPG…PPGPPAYPDE (72 aa)). The segment covering 54–65 (PGPPGPIGPPGG) has biased composition (pro residues). Basic and acidic residues predominate over residues 84-93 (ERGDKGEPGE). The 114-residue stretch at 134–247 (VGEKVFSTNG…CLQYRLAICE (114 aa)) folds into the C-type lectin domain. Disulfide bonds link Cys-155–Cys-246 and Cys-224–Cys-238. The N-linked (GlcNAc...) asparagine glycan is linked to Asn-207. Positions 215, 217, 234, and 235 each coordinate Ca(2+).

It belongs to the SFTPA family. As to quaternary structure, oligomeric complex of 6 set of homotrimers.

Its subcellular location is the secreted. It is found in the extracellular space. The protein resides in the extracellular matrix. The protein localises to the surface film. In presence of calcium ions, it binds to surfactant phospholipids and contributes to lower the surface tension at the air-liquid interface in the alveoli of the mammalian lung and is essential for normal respiration. Enhances the expression of MYO18A/SP-R210 on alveolar macrophages. The protein is Pulmonary surfactant-associated protein A (SFTPA1) of Equus caballus (Horse).